A 333-amino-acid chain; its full sequence is Ribosomal RNA small subunit methyltransferase C (333 aa).

Belongs to the methyltransferase superfamily. RsmC family. As to quaternary structure, monomer.

The protein resides in the cytoplasm. The enzyme catalyses guanosine(1207) in 16S rRNA + S-adenosyl-L-methionine = N(2)-methylguanosine(1207) in 16S rRNA + S-adenosyl-L-homocysteine + H(+). Functionally, specifically methylates the guanine in position 1207 of 16S rRNA in the 30S particle. This is Ribosomal RNA small subunit methyltransferase C from Actinobacillus succinogenes (strain ATCC 55618 / DSM 22257 / CCUG 43843 / 130Z).